A 293-amino-acid polypeptide reads, in one-letter code: Triacylglycerol lipase (293 aa).

Residues 10-206 form the AB hydrolase-1 domain; it reads PILLVHGLFG…YYSWSGIIKG (197 aa). Leu17 contacts substrate. The Nucleophile role is filled by Ser83. Residue Gln84 coordinates substrate. Ca(2+) is bound at residue Asp217. Catalysis depends on charge relay system residues Asp238 and His260. Residues Asp262, His266, and Arg269 each coordinate Ca(2+).

It belongs to the AB hydrolase superfamily. Pseudomonas lipase family. Ca(2+) is required as a cofactor.

It localises to the secreted. The enzyme catalyses a triacylglycerol + H2O = a diacylglycerol + a fatty acid + H(+). Functionally, catalyzes the hydrolysis of triacylglycerols, with the highest activity with tributyrin (C4), lower activity with tricaprylin (C8), and much lower activity with triacetin (C2), trilaurin (C12) and triolein (C18). The polypeptide is Triacylglycerol lipase (lips) (Pseudomonas fragi).